The chain runs to 89 residues: Small ribosomal subunit protein uS15 (89 aa).

Belongs to the universal ribosomal protein uS15 family. In terms of assembly, part of the 30S ribosomal subunit. Forms a bridge to the 50S subunit in the 70S ribosome, contacting the 23S rRNA.

Its function is as follows. One of the primary rRNA binding proteins, it binds directly to 16S rRNA where it helps nucleate assembly of the platform of the 30S subunit by binding and bridging several RNA helices of the 16S rRNA. In terms of biological role, forms an intersubunit bridge (bridge B4) with the 23S rRNA of the 50S subunit in the ribosome. This chain is Small ribosomal subunit protein uS15, found in Chelativorans sp. (strain BNC1).